A 445-amino-acid chain; its full sequence is 3-phosphoshikimate 1-carboxyvinyltransferase (445 aa).

Residues lysine 28, serine 29, and arginine 33 each contribute to the 3-phosphoshikimate site. Lysine 28 contacts phosphoenolpyruvate. Glycine 101 and arginine 129 together coordinate phosphoenolpyruvate. 3-phosphoshikimate is bound by residues serine 175, glutamine 177, aspartate 328, and lysine 355. Position 177 (glutamine 177) interacts with phosphoenolpyruvate. Aspartate 328 functions as the Proton acceptor in the catalytic mechanism. Arginine 359 and arginine 402 together coordinate phosphoenolpyruvate.

Belongs to the EPSP synthase family. In terms of assembly, monomer.

The protein resides in the cytoplasm. The catalysed reaction is 3-phosphoshikimate + phosphoenolpyruvate = 5-O-(1-carboxyvinyl)-3-phosphoshikimate + phosphate. The protein operates within metabolic intermediate biosynthesis; chorismate biosynthesis; chorismate from D-erythrose 4-phosphate and phosphoenolpyruvate: step 6/7. Catalyzes the transfer of the enolpyruvyl moiety of phosphoenolpyruvate (PEP) to the 5-hydroxyl of shikimate-3-phosphate (S3P) to produce enolpyruvyl shikimate-3-phosphate and inorganic phosphate. The polypeptide is 3-phosphoshikimate 1-carboxyvinyltransferase (Rhodopseudomonas palustris (strain HaA2)).